Consider the following 146-residue polypeptide: Large ribosomal subunit protein uL15 (146 aa).

Residues 1–10 (MKLHELKPAE) show a composition bias toward basic and acidic residues. A disordered region spans residues 1-51 (MKLHELKPAEGSRQVRNRVGRGTSSGNGKTAGRGQKGQKARSGGGVRLGFE). Composition is skewed to gly residues over residues 23–35 (TSSGNGKTAGRGQ) and 42–51 (SGGGVRLGFE).

This sequence belongs to the universal ribosomal protein uL15 family. Part of the 50S ribosomal subunit.

Its function is as follows. Binds to the 23S rRNA. In Enterococcus faecalis (strain ATCC 700802 / V583), this protein is Large ribosomal subunit protein uL15.